Here is a 99-residue protein sequence, read N- to C-terminus: Acylphosphatase (99 aa).

The Acylphosphatase-like domain maps to 5–97 (IRQVMISGRV…QPGERFSILS (93 aa)). Catalysis depends on residues Arg20 and Asn38.

This sequence belongs to the acylphosphatase family.

The catalysed reaction is an acyl phosphate + H2O = a carboxylate + phosphate + H(+). The protein is Acylphosphatase (acyP) of Rhodopseudomonas palustris (strain ATCC BAA-98 / CGA009).